A 274-amino-acid polypeptide reads, in one-letter code: Proteasome subunit beta (274 aa).

Positions 1–52 (MPDPTGVAGRLPAVFMTPGTSSFTDFLSVAAPDLLPGARGPLPAPVTDAAHG) are cleaved as a propeptide — removed in mature form; by autocatalysis. Residue threonine 53 is the Nucleophile of the active site.

The protein belongs to the peptidase T1B family. The 20S proteasome core is composed of 14 alpha and 14 beta subunits that assemble into four stacked heptameric rings, resulting in a barrel-shaped structure. The two inner rings, each composed of seven catalytic beta subunits, are sandwiched by two outer rings, each composed of seven alpha subunits. The catalytic chamber with the active sites is on the inside of the barrel. Has a gated structure, the ends of the cylinder being occluded by the N-termini of the alpha-subunits. Is capped by the proteasome-associated ATPase, ARC.

Its subcellular location is the cytoplasm. It catalyses the reaction Cleavage of peptide bonds with very broad specificity.. It participates in protein degradation; proteasomal Pup-dependent pathway. Its activity is regulated as follows. The formation of the proteasomal ATPase ARC-20S proteasome complex, likely via the docking of the C-termini of ARC into the intersubunit pockets in the alpha-rings, may trigger opening of the gate for substrate entry. Interconversion between the open-gate and close-gate conformations leads to a dynamic regulation of the 20S proteasome proteolysis activity. Component of the proteasome core, a large protease complex with broad specificity involved in protein degradation. The sequence is that of Proteasome subunit beta from Parafrankia sp. (strain EAN1pec).